Here is a 365-residue protein sequence, read N- to C-terminus: NAC domain-containing protein 37 (365 aa).

An NAC domain is found at 9–158 (VPPGFRFHPT…GWVVCRAFKK (150 aa)). The DNA-binding element occupies 109 to 164 (IGMRKTLVFYKGRAPNGKKSDWIMHEYRLESDENAPPQEEGWVVCRAFKKRATGQA).

It belongs to the plant vascular related NAC-domain protein family. Interacts with NAC030/VND7. As to expression, expressed in root metaxylem pole and in shoot pre-procambium and procambium. Present in root developing xylems. Specifically expressed in vessels but not in interfascicular fibers in stems.

The protein resides in the nucleus. Transcription activator that binds to the secondary wall NAC binding element (SNBE), 5'-(T/A)NN(C/T)(T/C/G)TNNNNNNNA(A/C)GN(A/C/T)(A/T)-3', in the promoter of target genes. Involved in xylem formation by promoting the expression of secondary wall-associated transcription factors and of genes involved in secondary wall biosynthesis and programmed cell death, genes driven by the secondary wall NAC binding element (SNBE). Triggers thickening of secondary walls. This chain is NAC domain-containing protein 37, found in Arabidopsis thaliana (Mouse-ear cress).